A 280-amino-acid polypeptide reads, in one-letter code: UPF0494 membrane protein C750.06c (280 aa).

A run of 4 helical transmembrane segments spans residues 107-127 (WPLL…KFEV), 144-164 (IWVP…SLIF), 178-198 (VIIA…GMII), and 199-219 (AALG…LYFG).

The protein belongs to the UPF0494 family.

The protein resides in the cytoplasm. Its subcellular location is the vacuole. The protein localises to the membrane. The protein is UPF0494 membrane protein C750.06c of Schizosaccharomyces pombe (strain 972 / ATCC 24843) (Fission yeast).